Reading from the N-terminus, the 518-residue chain is Protein CYCLOPS (518 aa).

The tract at residues 401 to 451 (DKKRKSLERYGSITSAVSDDKGDTTKKRRVERSRKMAEAKERNSTPSVPSD) is disordered. 2 consecutive short sequence motifs (nuclear localization signal) follow at residues 402 to 405 (KKRK) and 426 to 429 (KKRR). A compositionally biased stretch (basic and acidic residues) spans 433-443 (SRKMAEAKERN). Residues 452–518 (MQAVLKRCEN…ERILSETEKM (67 aa)) adopt a coiled-coil conformation.

This sequence belongs to the CYCLOPS family. As to quaternary structure, forms homodimers. Interacts with CCAMK. Phosphorylated at the N-terminus by CCAMK. In terms of tissue distribution, expressed in roots.

Its subcellular location is the nucleus. In terms of biological role, involved in symbiotic signaling. Required for root infection by symbiotic rhizobia, infection thread (IT) formation, and nodule development. Probably not involved in nodule organogenesis. Involved in arbuscular mycorrhizal (AM) symbiosis. Required for fungal infection of the outer cortical cell layers, and for arbuscule development during the AM symbiosis, by binding, as a complex comprising CCaMK, CYCLOPS, and DELLA, to RAM1 promoter cis element thus promoting its expression. Acts downstream of CCAMK. Binds to the promoter of ERN1 and strongly transactivates ERN1, a transcriptional regulator required for nodulation. The polypeptide is Protein CYCLOPS (Lotus japonicus (Lotus corniculatus var. japonicus)).